Reading from the N-terminus, the 496-residue chain is Amidophosphoribosyltransferase (496 aa).

Positions 1 to 21 are excised as a propeptide; it reads MNQSHSFPTDDPLDGDTLHEE. Residue C22 is the Nucleophile of the active site. The Glutamine amidotransferase type-2 domain maps to 22 to 241; it reads CGVFGILGHP…NGEVIICEIQ (220 aa).

It in the C-terminal section; belongs to the purine/pyrimidine phosphoribosyltransferase family.

It catalyses the reaction 5-phospho-beta-D-ribosylamine + L-glutamate + diphosphate = 5-phospho-alpha-D-ribose 1-diphosphate + L-glutamine + H2O. It functions in the pathway purine metabolism; IMP biosynthesis via de novo pathway; N(1)-(5-phospho-D-ribosyl)glycinamide from 5-phospho-alpha-D-ribose 1-diphosphate: step 1/2. Catalyzes the formation of phosphoribosylamine from phosphoribosylpyrophosphate (PRPP) and glutamine. The polypeptide is Amidophosphoribosyltransferase (Rhizobium etli (strain ATCC 51251 / DSM 11541 / JCM 21823 / NBRC 15573 / CFN 42)).